The chain runs to 147 residues: Transcriptional regulator MraZ (147 aa).

SpoVT-AbrB domains lie at 5–52 and 81–124; these read SHAI…PETE and ATTL…SEEA.

The protein belongs to the MraZ family. In terms of assembly, forms oligomers.

The protein resides in the cytoplasm. It localises to the nucleoid. The polypeptide is Transcriptional regulator MraZ (Saccharophagus degradans (strain 2-40 / ATCC 43961 / DSM 17024)).